We begin with the raw amino-acid sequence, 118 residues long: Immunoglobulin lambda variable 2-8 (118 aa).

A signal peptide spans 1 to 19; the sequence is MAWALLLLTLLTQGTGSWA. The residue at position 20 (Gln-20) is a Pyrrolidone carboxylic acid. The tract at residues 20–44 is framework-1; sequence QSALTQPPSASGSPGQSVTISCTGT. Residues 20–118 enclose the Ig-like domain; the sequence is QSALTQPPSA…CSSYAGSNNF (99 aa). The cysteines at positions 41 and 109 are disulfide-linked. The interval 45–53 is complementarity-determining-1; that stretch reads SSDVGGYNY. A framework-2 region spans residues 54–70; the sequence is VSWYQQHPGKAPKLMIY. The interval 71–73 is complementarity-determining-2; the sequence is EVS. The tract at residues 74 to 109 is framework-3; that stretch reads KRPSGVPDRFSGSKSGNTASLTVSGLQAEDEADYYC. The interval 76–97 is disordered; sequence PSGVPDRFSGSKSGNTASLTVS. Residues 85-97 show a composition bias toward polar residues; sequence GSKSGNTASLTVS. Residues 110–118 are complementarity-determining-3; sequence SSYAGSNNF.

Immunoglobulins are composed of two identical heavy chains and two identical light chains; disulfide-linked.

Its subcellular location is the secreted. The protein resides in the cell membrane. Its function is as follows. V region of the variable domain of immunoglobulin light chains that participates in the antigen recognition. Immunoglobulins, also known as antibodies, are membrane-bound or secreted glycoproteins produced by B lymphocytes. In the recognition phase of humoral immunity, the membrane-bound immunoglobulins serve as receptors which, upon binding of a specific antigen, trigger the clonal expansion and differentiation of B lymphocytes into immunoglobulins-secreting plasma cells. Secreted immunoglobulins mediate the effector phase of humoral immunity, which results in the elimination of bound antigens. The antigen binding site is formed by the variable domain of one heavy chain, together with that of its associated light chain. Thus, each immunoglobulin has two antigen binding sites with remarkable affinity for a particular antigen. The variable domains are assembled by a process called V-(D)-J rearrangement and can then be subjected to somatic hypermutations which, after exposure to antigen and selection, allow affinity maturation for a particular antigen. In Homo sapiens (Human), this protein is Immunoglobulin lambda variable 2-8.